Reading from the N-terminus, the 161-residue chain is Protein ilm1 (161 aa).

Over 1-6 (MLFSFR) the chain is Cytoplasmic. Residues 7-27 (AIVLFYCCMLTFAGIGFLWNP) form a helical membrane-spanning segment. Residues 28 to 56 (KFVVESGLVALIGASMEVKPLIVTQDNLS) are Lumenal-facing. Residues 57-77 (TLALSGLVFLILGMIYTISLL) traverse the membrane as a helical segment. Over 78-81 (QSNF) the chain is Cytoplasmic. The chain crosses the membrane as a helical span at residues 82 to 102 (LFFSGITPIRAIFDFILTGFI). The Lumenal segment spans residues 103–112 (YLKKEHIASN). Residues 113 to 133 (SLTFTFAFCDLMWQFWMFAAM) traverse the membrane as a helical segment. Over 134–161 (SEERAKYLKNQKKAEELAARKAREVEES) the chain is Cytoplasmic.

The protein belongs to the ILM1 family.

It is found in the endoplasmic reticulum. Its subcellular location is the membrane. This Schizosaccharomyces pombe (strain 972 / ATCC 24843) (Fission yeast) protein is Protein ilm1.